The primary structure comprises 153 residues: Regulator of ribonuclease activity B (153 aa).

The tract at residues 114-153 (DPNADDDEYGDDGEFLDDEDEYGDDGEFFDDEDEEEPRVH) is disordered. A compositionally biased stretch (acidic residues) spans 115–153 (PNADDDEYGDDGEFLDDEDEYGDDGEFFDDEDEEEPRVH).

This sequence belongs to the RraB family. As to quaternary structure, interacts with the C-terminal region of Rne.

It localises to the cytoplasm. Its function is as follows. Globally modulates RNA abundance by binding to RNase E (Rne) and regulating its endonucleolytic activity. Can modulate Rne action in a substrate-dependent manner by altering the composition of the degradosome. This chain is Regulator of ribonuclease activity B, found in Haemophilus influenzae (strain ATCC 51907 / DSM 11121 / KW20 / Rd).